A 243-amino-acid polypeptide reads, in one-letter code: UPF0173 metal-dependent hydrolase Caur_2542 (243 aa).

It belongs to the UPF0173 family.

In Chloroflexus aurantiacus (strain ATCC 29366 / DSM 635 / J-10-fl), this protein is UPF0173 metal-dependent hydrolase Caur_2542.